The chain runs to 762 residues: uncharacterized protein (762 aa).

One can recognise an MCM domain in the interval 334–542 (IIDILSNYLI…SDEEIAEHIL (209 aa)). An ATP-binding site is contributed by 384–391 (TDPGIGKS).

It belongs to the MCM family.

This is an uncharacterized protein from Methanocaldococcus jannaschii (strain ATCC 43067 / DSM 2661 / JAL-1 / JCM 10045 / NBRC 100440) (Methanococcus jannaschii).